The chain runs to 374 residues: MAPASITTTTTVARRIVGSRRRTKATSPPDSPPPKKLKPISEILAKAQYAVVERADYGDVSCMQCGSGERAEELLLCDKCDKGFHMKCVRPIVVRVPIGSWLCPKCSGQRRVRRLSQRKIIDFFRIQKCNHKTDKCSSPQDIRKHRRRSGSLVYQKRRRRLLPFVSSEDPAQRLKQMGTLASALTELQMEFSDDLTYSSGMAPRSANQARFEEGGMQVLTKEDIETLEQCRAMCKRGDCPPLLVVFDSREGFTVEADGQIKDMTFIAEYTGDVDYIRNREHDDCDSMMTLLLAKDPSKSLVICPDKRGNIARFISGINNHTLDGKKKQNCKCVRYSVNGECRVFLVATRDIAKGERLYYDYNGYEHEYPTQHFV.

The transit peptide at 1–46 (MAPASITTTTTVARRIVGSRRRTKATSPPDSPPPKKLKPISEILAK) directs the protein to the chloroplast. A disordered region spans residues 16–38 (IVGSRRRTKATSPPDSPPPKKLK). The PHD-type zinc finger occupies 59 to 109 (DVSCMQCGSGERAEELLLCDKCDKGFHMKCVRPIVVRVPIGSWLCPKCSGQ). M216 contributes to the substrate binding site. The region spanning 240–362 (PPLLVVFDSR…KGERLYYDYN (123 aa)) is the SET domain. S-adenosyl-L-methionine-binding positions include 250–252 (EGF) and 312–316 (RFISG). Residues R334 and 364 to 365 (YE) contribute to the substrate site. Residues Y368 and V374 each coordinate S-adenosyl-L-methionine.

It belongs to the class V-like SAM-binding methyltransferase superfamily. In terms of assembly, homodimer.

It is found in the plastid. The protein localises to the chloroplast. Its subcellular location is the nucleus. It catalyses the reaction L-lysyl(27)-[histone H3] + S-adenosyl-L-methionine = N(6)-methyl-L-lysyl(27)-[histone H3] + S-adenosyl-L-homocysteine + H(+). Functionally, histone methyltransferase that specifically monomethylates 'Lys-27' of histone H3 (H3K27me1). Has much higher activity on nucleosomes containing H3.1 than H3.3. Involved in the formation of constitutive heterochromatin and the silencing of heterochromatic elements. The sequence is that of Probable Histone-lysine N-methyltransferase ATXR5 (ATXR5) from Ricinus communis (Castor bean).